Here is a 156-residue protein sequence, read N- to C-terminus: SsrA-binding protein (156 aa).

The protein belongs to the SmpB family.

It localises to the cytoplasm. In terms of biological role, required for rescue of stalled ribosomes mediated by trans-translation. Binds to transfer-messenger RNA (tmRNA), required for stable association of tmRNA with ribosomes. tmRNA and SmpB together mimic tRNA shape, replacing the anticodon stem-loop with SmpB. tmRNA is encoded by the ssrA gene; the 2 termini fold to resemble tRNA(Ala) and it encodes a 'tag peptide', a short internal open reading frame. During trans-translation Ala-aminoacylated tmRNA acts like a tRNA, entering the A-site of stalled ribosomes, displacing the stalled mRNA. The ribosome then switches to translate the ORF on the tmRNA; the nascent peptide is terminated with the 'tag peptide' encoded by the tmRNA and targeted for degradation. The ribosome is freed to recommence translation, which seems to be the essential function of trans-translation. The protein is SsrA-binding protein of Staphylococcus epidermidis (strain ATCC 35984 / DSM 28319 / BCRC 17069 / CCUG 31568 / BM 3577 / RP62A).